A 70-amino-acid chain; its full sequence is Putative membrane protein insertion efficiency factor (70 aa).

The protein belongs to the UPF0161 family.

The protein localises to the cell inner membrane. Functionally, could be involved in insertion of integral membrane proteins into the membrane. This chain is Putative membrane protein insertion efficiency factor, found in Geobacter sp. (strain M21).